Here is a 428-residue protein sequence, read N- to C-terminus: Gamma-glutamyl phosphate reductase (428 aa).

The protein belongs to the gamma-glutamyl phosphate reductase family.

It is found in the cytoplasm. The catalysed reaction is L-glutamate 5-semialdehyde + phosphate + NADP(+) = L-glutamyl 5-phosphate + NADPH + H(+). The protein operates within amino-acid biosynthesis; L-proline biosynthesis; L-glutamate 5-semialdehyde from L-glutamate: step 2/2. Its function is as follows. Catalyzes the NADPH-dependent reduction of L-glutamate 5-phosphate into L-glutamate 5-semialdehyde and phosphate. The product spontaneously undergoes cyclization to form 1-pyrroline-5-carboxylate. This Agrobacterium fabrum (strain C58 / ATCC 33970) (Agrobacterium tumefaciens (strain C58)) protein is Gamma-glutamyl phosphate reductase.